Reading from the N-terminus, the 440-residue chain is Tol-Pal system protein TolB (440 aa).

Positions 1–28 are cleaved as a signal peptide; that stretch reads MVMTRRIFFSWFIVICSLWLSSFSSVHA. The segment at 417–440 is disordered; the sequence is RNERQLPTPNDASDPAWSPLLNMQ.

It belongs to the TolB family. As to quaternary structure, the Tol-Pal system is composed of five core proteins: the inner membrane proteins TolA, TolQ and TolR, the periplasmic protein TolB and the outer membrane protein Pal. They form a network linking the inner and outer membranes and the peptidoglycan layer.

It is found in the periplasm. Its function is as follows. Part of the Tol-Pal system, which plays a role in outer membrane invagination during cell division and is important for maintaining outer membrane integrity. The sequence is that of Tol-Pal system protein TolB from Bartonella quintana (strain Toulouse) (Rochalimaea quintana).